The primary structure comprises 349 residues: Serine/threonine-protein kinase SRK2A (349 aa).

Residues 12-268 (YELVKDIGSG…IQEIKNHEWF (257 aa)) enclose the Protein kinase domain. ATP-binding positions include 18–26 (IGSGNFGVA) and lysine 41. The active-site Proton acceptor is the aspartate 131. The tract at residues 151 to 177 (DFGYSKSSLLHSQPKSTVGTPAYIAPE) is activation loop.

It belongs to the protein kinase superfamily. Ser/Thr protein kinase family.

It carries out the reaction L-seryl-[protein] + ATP = O-phospho-L-seryl-[protein] + ADP + H(+). The catalysed reaction is L-threonyl-[protein] + ATP = O-phospho-L-threonyl-[protein] + ADP + H(+). Its activity is regulated as follows. Activated by osmotic stress and by abscisic acid (ABA). Activation by NaCl is dependent on ABA. Functionally, involved in early responses to osmotic stress. The sequence is that of Serine/threonine-protein kinase SRK2A from Physcomitrium patens (Spreading-leaved earth moss).